Consider the following 87-residue polypeptide: Probable Fe(2+)-trafficking protein (87 aa).

Belongs to the Fe(2+)-trafficking protein family.

In terms of biological role, could be a mediator in iron transactions between iron acquisition and iron-requiring processes, such as synthesis and/or repair of Fe-S clusters in biosynthetic enzymes. The chain is Probable Fe(2+)-trafficking protein from Francisella philomiragia subsp. philomiragia (strain ATCC 25017 / CCUG 19701 / FSC 153 / O#319-036).